The sequence spans 114 residues: UPF0342 protein PEPE_0673 (114 aa).

It belongs to the UPF0342 family.

The polypeptide is UPF0342 protein PEPE_0673 (Pediococcus pentosaceus (strain ATCC 25745 / CCUG 21536 / LMG 10740 / 183-1w)).